Consider the following 263-residue polypeptide: Undecaprenyl-diphosphatase (263 aa).

A run of 6 helical transmembrane segments spans residues 40-60 (PGVL…LVYF), 87-107 (LLII…DFFV), 109-129 (AFHN…LLFF), 186-206 (FSFL…LLEW), 219-239 (AGAV…MGVV), and 243-263 (RLYA…AISS).

Belongs to the UppP family.

The protein resides in the cell inner membrane. It carries out the reaction di-trans,octa-cis-undecaprenyl diphosphate + H2O = di-trans,octa-cis-undecaprenyl phosphate + phosphate + H(+). Functionally, catalyzes the dephosphorylation of undecaprenyl diphosphate (UPP). Confers resistance to bacitracin. In Syntrophotalea carbinolica (strain DSM 2380 / NBRC 103641 / GraBd1) (Pelobacter carbinolicus), this protein is Undecaprenyl-diphosphatase.